The following is a 60-amino-acid chain: Large ribosomal subunit protein uL30 (60 aa).

This sequence belongs to the universal ribosomal protein uL30 family. Part of the 50S ribosomal subunit.

This Thermus thermophilus (strain ATCC BAA-163 / DSM 7039 / HB27) protein is Large ribosomal subunit protein uL30.